The chain runs to 119 residues: Large ribosomal subunit protein uL22 (119 aa).

This sequence belongs to the universal ribosomal protein uL22 family. Part of the 50S ribosomal subunit.

This protein binds specifically to 23S rRNA; its binding is stimulated by other ribosomal proteins, e.g. L4, L17, and L20. It is important during the early stages of 50S assembly. It makes multiple contacts with different domains of the 23S rRNA in the assembled 50S subunit and ribosome. Functionally, the globular domain of the protein is located near the polypeptide exit tunnel on the outside of the subunit, while an extended beta-hairpin is found that lines the wall of the exit tunnel in the center of the 70S ribosome. In Microcystis aeruginosa (strain NIES-843 / IAM M-2473), this protein is Large ribosomal subunit protein uL22.